Here is a 400-residue protein sequence, read N- to C-terminus: Proline-rich protein 5 (400 aa).

A disordered region spans residues 301–358 (TDSTSKLSMAGTKPPGEGERPPISNGQFPPLHNLSDSQQGLYNSQRDSPLLPAPSSSP). Positions 334–347 (LSDSQQGLYNSQRD) are enriched in polar residues. Residues 348–358 (SPLLPAPSSSP) show a composition bias toward low complexity.

This sequence belongs to the PROTOR family. Associated component of the mechanistic target of rapamycin complex 2 (mTORC2).

In terms of biological role, associated subunit of mTORC2, which regulates cell growth and survival in response to hormonal signals. In Xenopus laevis (African clawed frog), this protein is Proline-rich protein 5 (prr5).